Here is a 198-residue protein sequence, read N- to C-terminus: Holliday junction branch migration complex subunit RuvA (198 aa).

A domain I region spans residues 1 to 61 (MILYRIGEII…EYQYATYAFK (61 aa)). The domain II stretch occupies residues 62 to 139 (DFKERLLFVD…KMISPKDAAK (78 aa)). A flexible linker region spans residues 140–144 (INETT). Residues 144 to 198 (TNTLSEVKETLKMVGFKTKQIDGALSKISSTDDVEKMIEEAIKLMSTQNYESATA) are domain III.

The protein belongs to the RuvA family. In terms of assembly, homotetramer. Forms an RuvA(8)-RuvB(12)-Holliday junction (HJ) complex. HJ DNA is sandwiched between 2 RuvA tetramers; dsDNA enters through RuvA and exits via RuvB. An RuvB hexamer assembles on each DNA strand where it exits the tetramer. Each RuvB hexamer is contacted by two RuvA subunits (via domain III) on 2 adjacent RuvB subunits; this complex drives branch migration. In the full resolvosome a probable DNA-RuvA(4)-RuvB(12)-RuvC(2) complex forms which resolves the HJ.

The protein localises to the cytoplasm. In terms of biological role, the RuvA-RuvB-RuvC complex processes Holliday junction (HJ) DNA during genetic recombination and DNA repair, while the RuvA-RuvB complex plays an important role in the rescue of blocked DNA replication forks via replication fork reversal (RFR). RuvA specifically binds to HJ cruciform DNA, conferring on it an open structure. The RuvB hexamer acts as an ATP-dependent pump, pulling dsDNA into and through the RuvAB complex. HJ branch migration allows RuvC to scan DNA until it finds its consensus sequence, where it cleaves and resolves the cruciform DNA. The sequence is that of Holliday junction branch migration complex subunit RuvA from Mycoplasmopsis agalactiae (strain NCTC 10123 / CIP 59.7 / PG2) (Mycoplasma agalactiae).